Consider the following 449-residue polypeptide: Glucose-6-phosphate isomerase (449 aa).

The Proton donor role is filled by Glu-291. Active-site residues include His-312 and Lys-426.

Belongs to the GPI family.

It is found in the cytoplasm. It catalyses the reaction alpha-D-glucose 6-phosphate = beta-D-fructose 6-phosphate. Its pathway is carbohydrate biosynthesis; gluconeogenesis. It functions in the pathway carbohydrate degradation; glycolysis; D-glyceraldehyde 3-phosphate and glycerone phosphate from D-glucose: step 2/4. Its function is as follows. Catalyzes the reversible isomerization of glucose-6-phosphate to fructose-6-phosphate. The polypeptide is Glucose-6-phosphate isomerase (Streptococcus thermophilus (strain CNRZ 1066)).